The sequence spans 242 residues: DnaJ homolog subfamily B member 6 (242 aa).

Residues 3–69 (EYYDVLGVQR…KKRDIYDKYG (67 aa)) form the J domain.

As to quaternary structure, homooligomer.

The protein localises to the cytoplasm. Its subcellular location is the perinuclear region. It is found in the nucleus. In terms of biological role, has a stimulatory effect on the ATPase activity of HSP70 in a dose-dependent and time-dependent manner and hence acts as a co-chaperone of HSP70. Plays an indispensable role in the organization of KRT8/KRT18 filaments. Acts as an endogenous molecular chaperone for neuronal proteins including huntingtin. Suppresses aggregation and toxicity of polyglutamine-containing, aggregation-prone proteins. Also reduces cellular toxicity and caspase-3 activity. The protein is DnaJ homolog subfamily B member 6 of Xenopus tropicalis (Western clawed frog).